The primary structure comprises 88 residues: uncharacterized protein (88 aa).

This is an uncharacterized protein from Escherichia coli (strain K12).